We begin with the raw amino-acid sequence, 219 residues long: Sporamin A (219 aa).

The signal sequence occupies residues 1–23; the sequence is MKALTLALFLALSLYLLPNPAHS.

This sequence belongs to the protease inhibitor I3 (leguminous Kunitz-type inhibitor) family. As to expression, accumulates specifically in tuberous roots and tubers upon tuberization. Sporamin accounts 60 to 80% of the total soluble protein of the organ.

The protein localises to the vacuole. In terms of biological role, major tuberous root protein. In Ipomoea batatas (Sweet potato), this protein is Sporamin A (GSPO-A1).